A 215-amino-acid chain; its full sequence is Proteasome subunit beta (215 aa).

Positions 1-12 are cleaved as a propeptide — removed in mature form; by autocatalysis; the sequence is MLGEIQDKVYKG. Thr-13 (nucleophile) is an active-site residue.

The protein belongs to the peptidase T1B family. As to quaternary structure, the 20S proteasome core is composed of 14 alpha and 14 beta subunits that assemble into four stacked heptameric rings, resulting in a barrel-shaped structure. The two inner rings, each composed of seven catalytic beta subunits, are sandwiched by two outer rings, each composed of seven alpha subunits. The catalytic chamber with the active sites is on the inside of the barrel. Has a gated structure, the ends of the cylinder being occluded by the N-termini of the alpha-subunits. Is capped at one or both ends by the proteasome regulatory ATPase, PAN.

It localises to the cytoplasm. The enzyme catalyses Cleavage of peptide bonds with very broad specificity.. With respect to regulation, the formation of the proteasomal ATPase PAN-20S proteasome complex, via the docking of the C-termini of PAN into the intersubunit pockets in the alpha-rings, triggers opening of the gate for substrate entry. Interconversion between the open-gate and close-gate conformations leads to a dynamic regulation of the 20S proteasome proteolysis activity. Its function is as follows. Component of the proteasome core, a large protease complex with broad specificity involved in protein degradation. In Archaeoglobus profundus (strain DSM 5631 / JCM 9629 / NBRC 100127 / Av18), this protein is Proteasome subunit beta.